Consider the following 388-residue polypeptide: Succinate--CoA ligase [ADP-forming] subunit beta (388 aa).

In terms of domain architecture, ATP-grasp spans 9 to 244; that stretch reads KEILRKFGVA…PDEEDPKETQ (236 aa). ATP-binding positions include lysine 46, 53 to 55, glutamate 99, cysteine 102, and glutamate 107; that span reads GRG. 2 residues coordinate Mg(2+): asparagine 199 and aspartate 213. Substrate is bound by residues asparagine 264 and 321-323; that span reads GIM.

The protein belongs to the succinate/malate CoA ligase beta subunit family. Heterotetramer of two alpha and two beta subunits. Mg(2+) serves as cofactor.

The catalysed reaction is succinate + ATP + CoA = succinyl-CoA + ADP + phosphate. It carries out the reaction GTP + succinate + CoA = succinyl-CoA + GDP + phosphate. The protein operates within carbohydrate metabolism; tricarboxylic acid cycle; succinate from succinyl-CoA (ligase route): step 1/1. Its function is as follows. Succinyl-CoA synthetase functions in the citric acid cycle (TCA), coupling the hydrolysis of succinyl-CoA to the synthesis of either ATP or GTP and thus represents the only step of substrate-level phosphorylation in the TCA. The beta subunit provides nucleotide specificity of the enzyme and binds the substrate succinate, while the binding sites for coenzyme A and phosphate are found in the alpha subunit. In Anaeromyxobacter dehalogenans (strain 2CP-C), this protein is Succinate--CoA ligase [ADP-forming] subunit beta.